We begin with the raw amino-acid sequence, 260 residues long: Cytosolic Fe-S cluster assembly factor Nubp2 homolog (260 aa).

14 to 21 (GKGGVGKS) serves as a coordination point for ATP. Residues Cys-188 and Cys-191 each contribute to the [4Fe-4S] cluster site.

It belongs to the Mrp/NBP35 ATP-binding proteins family. NUBP2/CFD1 subfamily. In terms of assembly, heterotetramer of 2 Nubp1 and 2 Nubp2 chains. Requires [4Fe-4S] cluster as cofactor.

It is found in the cytoplasm. Its function is as follows. Component of the cytosolic iron-sulfur (Fe/S) protein assembly (CIA) machinery. Required for maturation of extramitochondrial Fe-S proteins. The Nubp1-Nubp2 heterotetramer forms a Fe-S scaffold complex, mediating the de novo assembly of an Fe-S cluster and its transfer to target apoproteins. The protein is Cytosolic Fe-S cluster assembly factor Nubp2 homolog of Drosophila erecta (Fruit fly).